Consider the following 231-residue polypeptide: Protein APE_1056.1 (231 aa).

The 186-residue stretch at 29-214 folds into the AMMECR1 domain; it reads VRIARRAVEE…ETEPRGPVVR (186 aa).

This chain is Protein APE_1056.1, found in Aeropyrum pernix (strain ATCC 700893 / DSM 11879 / JCM 9820 / NBRC 100138 / K1).